Here is a 96-residue protein sequence, read N- to C-terminus: UPF0235 protein MK0273 (96 aa).

This sequence belongs to the UPF0235 family.

In Methanopyrus kandleri (strain AV19 / DSM 6324 / JCM 9639 / NBRC 100938), this protein is UPF0235 protein MK0273.